We begin with the raw amino-acid sequence, 65 residues long: Large ribosomal subunit protein bL33c (65 aa).

Belongs to the bacterial ribosomal protein bL33 family.

It is found in the plastid. This is Large ribosomal subunit protein bL33c from Aneura mirabilis (Parasitic liverwort).